Reading from the N-terminus, the 540-residue chain is CTP synthase (540 aa).

Residues 1-267 (MTKYIFVTGG…DQKVCDFLHL (267 aa)) form an amidoligase domain region. CTP is bound at residue Ser13. Ser13 contacts UTP. 14–19 (SLGKGI) lines the ATP pocket. Position 54 (Tyr54) interacts with L-glutamine. Asp71 contributes to the ATP binding site. The Mg(2+) site is built by Asp71 and Glu141. CTP contacts are provided by residues 148–150 (DIE), 188–193 (KTKPTQ), and Lys224. UTP contacts are provided by residues 188–193 (KTKPTQ) and Lys224. The Glutamine amidotransferase type-1 domain occupies 294 to 537 (TITLVGKYVE…IGAASGLPAQ (244 aa)). Position 356 (Gly356) interacts with L-glutamine. The active-site Nucleophile; for glutamine hydrolysis is Cys383. Residues 384–387 (LGMQ), Glu407, and Arg465 each bind L-glutamine. Active-site residues include His510 and Glu512.

This sequence belongs to the CTP synthase family. As to quaternary structure, homotetramer.

It carries out the reaction UTP + L-glutamine + ATP + H2O = CTP + L-glutamate + ADP + phosphate + 2 H(+). It catalyses the reaction L-glutamine + H2O = L-glutamate + NH4(+). The enzyme catalyses UTP + NH4(+) + ATP = CTP + ADP + phosphate + 2 H(+). The protein operates within pyrimidine metabolism; CTP biosynthesis via de novo pathway; CTP from UDP: step 2/2. Allosterically activated by GTP, when glutamine is the substrate; GTP has no effect on the reaction when ammonia is the substrate. The allosteric effector GTP functions by stabilizing the protein conformation that binds the tetrahedral intermediate(s) formed during glutamine hydrolysis. Inhibited by the product CTP, via allosteric rather than competitive inhibition. Catalyzes the ATP-dependent amination of UTP to CTP with either L-glutamine or ammonia as the source of nitrogen. Regulates intracellular CTP levels through interactions with the four ribonucleotide triphosphates. The sequence is that of CTP synthase from Lactobacillus johnsonii (strain CNCM I-12250 / La1 / NCC 533).